The chain runs to 216 residues: Ras-related protein Rab-11A (216 aa).

Glycine 2 is subject to N-acetylglycine. 12 residues coordinate GTP: serine 20, glycine 21, valine 22, glycine 23, lysine 24, serine 25, asparagine 26, asparagine 37, leucine 38, serine 40, serine 42, and threonine 43. Serine 25 is a Mg(2+) binding site. The Switch 1 motif lies at 36–47 (FNLESKSTIGVE). Mg(2+) contacts are provided by threonine 43 and aspartate 66. The short motif at 67 to 86 (TAGQERYRAITSAYYRGAVG) is the Switch 2 element. Positions 69, 124, 125, 127, 155, and 156 each coordinate GTP. The segment at 183 to 211 (DRRENDMSPSNNVVPIHVPPTTENKPKVQ) is disordered. 2 S-geranylgeranyl cysteine lipidation sites follow: cysteine 212 and cysteine 213. Residue cysteine 213 is modified to Cysteine methyl ester. Positions 214–216 (QNI) are cleaved as a propeptide — removed in mature form.

Belongs to the small GTPase superfamily. Rab family. Interacts (GTP-bound form) with RAB11FIPs (via their C-termini) including RAB11FIP1, RAB11FIP2, RAB11FIP3, RAB11FIP4 and RAB11FIP5 effectors. Forms a complex with RAB11FIP3 and dynein intermediate chain DYNC1LI1; the interaction between RAB11A1 and RAB11FIP3 is direct; the complex regulates endocytic trafficking. Interacts with EVI5; EVI5 and RAB11FIP3 may be mutually exclusive and compete for binding RAB11A. Interacts with SGSM1, SGSM2, SGSM3 and VIPAS39. Interacts with EXOC6 in a GTP-dependent manner. Interacts with RAB11FIP5. Interacts with STXBP6. Interacts (GDP-bound form) with ZFYVE27. Interacts with BIRC6/bruce. May interact with TBC1D14. Interacts with UNC119; in a cell cycle-dependent manner. GDP-bound and nucleotide-free forms interact with SH3BP5. Interacts (GDP-bound form) with KIF5A in a ZFYVE27-dependent manner. Interacts (GDP-bound form) with RELCH. Found in a complex composed of RELCH, OSBP1 and RAB11A. Interacts with TBC1D12. Interacts with DEF6. Interacts with ATP9A. Forms a heterotetramer with RAB11FIP3; the GTP-bound form is preferred for binding. Forms a complex with Rabin8/RAB3IP and RAB11FIP3, probably a heterohexamer with two of each protein subunit, where Rabin8/RAB3IP and RAB11FIP3 simultaneously bind to RAB11A; the complex promotes preciliary trafficking and cilia growth. Forms a complex containing RAB11A, ASAP1, Rabin8/RAB3IP, RAP11FIP3 and ARF4; the complex promotes preciliary trafficking; the complex binds to RHO in photoreceptor cells and promotes RHO ciliary transport. Interacts (GTP-bound form) with WDR44; the interaction prevents RAB11A-RAB3IP-RAB11FIP3 complex formation. Mg(2+) serves as cofactor. In terms of tissue distribution, detected in various tissues, such as brain, testis, spleen, and heart.

The protein localises to the cell membrane. It is found in the endosome membrane. Its subcellular location is the recycling endosome membrane. It localises to the cleavage furrow. The protein resides in the cytoplasmic vesicle. The protein localises to the phagosome. It is found in the cytoplasmic vesicle membrane. Its subcellular location is the golgi apparatus. It localises to the trans-Golgi network. The enzyme catalyses GTP + H2O = GDP + phosphate + H(+). Its activity is regulated as follows. Regulated by guanine nucleotide exchange factors (GEFs) which promote the exchange of bound GDP for free GTP. Regulated by GTPase activating proteins (GAPs) which increase the GTP hydrolysis activity. Inhibited by GDP dissociation inhibitors (GDIs) which prevent Rab-GDP dissociation. The small GTPases Rab are key regulators of intracellular membrane trafficking, from the formation of transport vesicles to their fusion with membranes. Rabs cycle between an inactive GDP-bound form and an active GTP-bound form that is able to recruit to membranes different set of downstream effectors directly responsible for vesicle formation, movement, tethering and fusion. The small Rab GTPase RAB11A regulates endocytic recycling. Forms a functional Rab11/RAB11FIP3/dynein complex that regulates the movement of peripheral sorting endosomes (SE) along microtubule tracks toward the microtubule organizing center/centrosome, generating the endosomal recycling compartment (ERC). Acts as a major regulator of membrane delivery during cytokinesis. Together with MYO5B and RAB8A participates in epithelial cell polarization. Together with Rabin8/RAB3IP, RAB8A, the exocyst complex, PARD3, PRKCI, ANXA2, CDC42 and DNMBP promotes transcytosis of PODXL to the apical membrane initiation sites (AMIS), apical surface formation and lumenogenesis. Together with MYO5B participates in CFTR trafficking to the plasma membrane and TF (Transferrin) recycling in nonpolarized cells. Required in a complex with MYO5B and RAB11FIP2 for the transport of NPC1L1 to the plasma membrane. Participates in the sorting and basolateral transport of CDH1 from the Golgi apparatus to the plasma membrane. Regulates the recycling of FCGRT (receptor of Fc region of monomeric IgG) to basolateral membranes. May also play a role in melanosome transport and release from melanocytes. Promotes Rabin8/RAB3IP preciliary vesicular trafficking to mother centriole by forming a ciliary targeting complex containing Rab11, ASAP1, Rabin8/RAB3IP, RAB11FIP3 and ARF4, thereby regulating ciliogenesis initiation. On the contrary, upon LPAR1 receptor signaling pathway activation, interaction with phosphorylated WDR44 prevents Rab11-RAB3IP-RAB11FIP3 complex formation and cilia growth. Participates in the export of a subset of neosynthesized proteins through a Rab8-Rab10-Rab11-endososomal dependent export route via interaction with WDR44. The polypeptide is Ras-related protein Rab-11A (Rattus norvegicus (Rat)).